A 332-amino-acid polypeptide reads, in one-letter code: Tyrosine--tRNA ligase (332 aa).

Residues Y32, Y156, Q160, D163, and Q178 each coordinate L-tyrosine. A 'KMSKS' region motif is present at residues 219-223; that stretch reads KMSKS. ATP is bound at residue K222.

Belongs to the class-I aminoacyl-tRNA synthetase family. TyrS type 4 subfamily. In terms of assembly, homodimer.

Its subcellular location is the cytoplasm. It carries out the reaction tRNA(Tyr) + L-tyrosine + ATP = L-tyrosyl-tRNA(Tyr) + AMP + diphosphate + H(+). Functionally, catalyzes the attachment of tyrosine to tRNA(Tyr) in a two-step reaction: tyrosine is first activated by ATP to form Tyr-AMP and then transferred to the acceptor end of tRNA(Tyr). In Thermoplasma acidophilum (strain ATCC 25905 / DSM 1728 / JCM 9062 / NBRC 15155 / AMRC-C165), this protein is Tyrosine--tRNA ligase.